The chain runs to 77 residues: MSDIAARVKKIVVEHLNVDEDKVVDSASFIDDLGADSLDTVELVMAFEEEFGIEIPDDAAETIQTFGDATKFISEAQ.

One can recognise a Carrier domain in the interval 2–77 (SDIAARVKKI…DATKFISEAQ (76 aa)). The residue at position 37 (Ser-37) is an O-(pantetheine 4'-phosphoryl)serine.

It belongs to the acyl carrier protein (ACP) family. In terms of processing, 4'-phosphopantetheine is transferred from CoA to a specific serine of apo-ACP by AcpS. This modification is essential for activity because fatty acids are bound in thioester linkage to the sulfhydryl of the prosthetic group.

The protein localises to the cytoplasm. It participates in lipid metabolism; fatty acid biosynthesis. Carrier of the growing fatty acid chain in fatty acid biosynthesis. The polypeptide is Acyl carrier protein (Jannaschia sp. (strain CCS1)).